We begin with the raw amino-acid sequence, 280 residues long: Phosphonates import ATP-binding protein PhnC (280 aa).

In terms of domain architecture, ABC transporter spans 2-245; sequence FELKNVTRRF…AVKEIYGTDK (244 aa). ATP is bound at residue 34-41; that stretch reads GRSGAGKS. The interval 257–280 is disordered; that stretch reads TSLESKRRAEDVSSGRVAKAAAVH. Over residues 260–269 the composition is skewed to basic and acidic residues; that stretch reads ESKRRAEDVS.

Belongs to the ABC transporter superfamily. Phosphonates importer (TC 3.A.1.9.1) family. The complex is composed of two ATP-binding proteins (PhnC), two transmembrane proteins (PhnE) and a solute-binding protein (PhnD).

The protein resides in the cell inner membrane. It catalyses the reaction phosphonate(out) + ATP + H2O = phosphonate(in) + ADP + phosphate + H(+). Its function is as follows. Part of the ABC transporter complex PhnCDE involved in phosphonates import. Responsible for energy coupling to the transport system. This is Phosphonates import ATP-binding protein PhnC from Rhizobium johnstonii (strain DSM 114642 / LMG 32736 / 3841) (Rhizobium leguminosarum bv. viciae).